The chain runs to 110 residues: Suppressor of silencing 2b (110 aa).

The segment at 16-45 is disordered; that stretch reads ARMVEAKKQRRRSHKQNRRERGHKSPSERA. A Nuclear localization signal motif is present at residues 22 to 27; it reads KKQRRR. The segment covering 23-37 has biased composition (basic residues); that stretch reads KQRRRSHKQNRRERG.

It belongs to the cucumovirus/ilarvirus protein 2b family. In terms of assembly, homotetramer. Interacts with host AGO1; this interaction blocks AGO1 cleavage activity to attenuate RNA silencing and thus counter host defense. Interacts with host JAZ.

Its subcellular location is the host nucleus. Multifunctional protein that plays two independent roles: viral suppressor of host RNAi (VSR) and viral inducer of host attractiveness to insect vectors (VIA). Acts as a suppressor of RNA-mediated gene silencing, also known as post-transcriptional gene silencing (PTGS), a mechanism of plant viral defense that limits the accumulation of viral RNAs. May directly interfere with mobile silencing signaling. Also inhibits signal transduction by the phytohormone jasmonate, making the infected plant more attractive to aphids, which are the second host to play a role as a dissemination vector. Acts by binding to and inhibiting JAZ degradation in the host. This chain is Suppressor of silencing 2b, found in Cucurbita pepo (Vegetable marrow).